A 20-amino-acid chain; its full sequence is Pregnancy-associated glycoprotein 57 (20 aa).

The protein belongs to the peptidase A1 family. Post-translationally, glycosylated.

The protein localises to the secreted. In Ovis aries (Sheep), this protein is Pregnancy-associated glycoprotein 57.